The primary structure comprises 465 residues: Kynureninase (465 aa).

Met1 is modified (N-acetylmethionine). Residues Leu137, Thr138, 165-168 (FPSD), Ser221, Asp250, His253, and Tyr275 each bind pyridoxal 5'-phosphate. Lys276 is subject to N6-(pyridoxal phosphate)lysine. Trp305 and Asn333 together coordinate pyridoxal 5'-phosphate.

The protein belongs to the kynureninase family. In terms of assembly, homodimer. The cofactor is pyridoxal 5'-phosphate. In terms of tissue distribution, expressed in all tissues tested (heart, brain placenta, lung, liver, skeletal muscle, kidney and pancreas). Highest levels found in placenta, liver and lung. Expressed in all brain regions.

Its subcellular location is the cytoplasm. The protein localises to the cytosol. The catalysed reaction is L-kynurenine + H2O = anthranilate + L-alanine + H(+). It carries out the reaction 3-hydroxy-L-kynurenine + H2O = 3-hydroxyanthranilate + L-alanine + H(+). It functions in the pathway amino-acid degradation; L-kynurenine degradation; L-alanine and anthranilate from L-kynurenine: step 1/1. Its pathway is cofactor biosynthesis; NAD(+) biosynthesis; quinolinate from L-kynurenine: step 2/3. Inhibited by o-methoxybenzoylalanine (OMBA). Functionally, catalyzes the cleavage of L-kynurenine (L-Kyn) and L-3-hydroxykynurenine (L-3OHKyn) into anthranilic acid (AA) and 3-hydroxyanthranilic acid (3-OHAA), respectively. Has a preference for the L-3-hydroxy form. Also has cysteine-conjugate-beta-lyase activity. This Homo sapiens (Human) protein is Kynureninase.